A 348-amino-acid chain; its full sequence is Ferrochelatase (348 aa).

Fe cation is bound by residues histidine 218 and glutamate 299.

Belongs to the ferrochelatase family.

The protein localises to the cytoplasm. The catalysed reaction is heme b + 2 H(+) = protoporphyrin IX + Fe(2+). Its pathway is porphyrin-containing compound metabolism; protoheme biosynthesis; protoheme from protoporphyrin-IX: step 1/1. In terms of biological role, catalyzes the ferrous insertion into protoporphyrin IX. The chain is Ferrochelatase from Methylocella silvestris (strain DSM 15510 / CIP 108128 / LMG 27833 / NCIMB 13906 / BL2).